A 212-amino-acid chain; its full sequence is uncharacterized protein (212 aa).

4 helical membrane-spanning segments follow: residues 34 to 54 (IFGIVLVILSLPSALPIPAPG), 59 to 79 (FGVLIFLVAIQLMAGRQELWL), 126 to 146 (ILMGITVGSMAISMMIPIPGT), and 171 to 191 (AGMIFSVLIGVLMVSVIYVFF).

To R.meliloti ExoD.

Its subcellular location is the cell membrane. This is an uncharacterized protein from Synechocystis sp. (strain ATCC 27184 / PCC 6803 / Kazusa).